We begin with the raw amino-acid sequence, 40 residues long: Unknown protein from spot 207 of 2D-PAGE of etiolated coleoptile (40 aa).

Belongs to the GST superfamily. HSP26 family.

This is Unknown protein from spot 207 of 2D-PAGE of etiolated coleoptile from Zea mays (Maize).